Here is a 214-residue protein sequence, read N- to C-terminus: Putative ankyrin repeat protein R844 (214 aa).

5 ANK repeats span residues 41-70 (VEKN…QNKF), 81-110 (SLDK…NVKT), 111-140 (DNNM…DVRA), 142-170 (NDCA…DVTS), and 172-200 (NNFA…DIRA).

The chain is Putative ankyrin repeat protein R844 from Acanthamoeba polyphaga mimivirus (APMV).